Consider the following 125-residue polypeptide: Secretion system apparatus protein SsaO (125 aa).

This is Secretion system apparatus protein SsaO (ssaO) from Salmonella typhimurium (strain LT2 / SGSC1412 / ATCC 700720).